A 61-amino-acid polypeptide reads, in one-letter code: Short neurotoxin 2 (61 aa).

Cystine bridges form between C3–C23, C17–C40, C42–C53, and C54–C59.

Belongs to the three-finger toxin family. Short-chain subfamily. Type I alpha-neurotoxin sub-subfamily. In terms of tissue distribution, expressed by the venom gland.

The protein resides in the secreted. Its function is as follows. Binds to muscle nicotinic acetylcholine receptor (nAChR) and inhibit acetylcholine from binding to the receptor, thereby impairing neuromuscular transmission. This chain is Short neurotoxin 2, found in Naja haje haje (Egyptian cobra).